A 153-amino-acid polypeptide reads, in one-letter code: Large ribosomal subunit protein uL13 (153 aa).

It belongs to the universal ribosomal protein uL13 family. Part of the 50S ribosomal subunit.

Functionally, this protein is one of the early assembly proteins of the 50S ribosomal subunit, although it is not seen to bind rRNA by itself. It is important during the early stages of 50S assembly. This chain is Large ribosomal subunit protein uL13, found in Chelativorans sp. (strain BNC1).